Consider the following 130-residue polypeptide: Small ribosomal subunit protein uS8 (130 aa).

This sequence belongs to the universal ribosomal protein uS8 family. As to quaternary structure, part of the 30S ribosomal subunit.

Its function is as follows. One of the primary rRNA binding proteins, it binds directly to 16S rRNA central domain where it helps coordinate assembly of the platform of the 30S subunit. This chain is Small ribosomal subunit protein uS8, found in Korarchaeum cryptofilum (strain OPF8).